The primary structure comprises 174 residues: Actin-related protein 2/3 complex subunit 3 (174 aa).

It belongs to the ARPC3 family. In terms of assembly, component of the Arp2/3 complex composed of arp2, act2, arc1/p41-ARC, arc2/p34-ARC, arc3/p21-ARC, arc4/p20-ARC and arc5/p16-ARC.

It localises to the cytoplasm. The protein resides in the cytoskeleton. It is found in the actin patch. Functions as a component of the Arp2/3 complex which is involved in regulation of actin polymerization and together with an activating nucleation-promoting factor (NPF) mediates the formation of branched actin networks. This chain is Actin-related protein 2/3 complex subunit 3 (arc3), found in Schizosaccharomyces pombe (strain 972 / ATCC 24843) (Fission yeast).